The chain runs to 360 residues: sn-glycerol-3-phosphate import ATP-binding protein UgpC (360 aa).

The ABC transporter domain maps to 4–235 (LSLKGVKKSY…PATTFVASFI (232 aa)). 37–44 (GPSGCGKS) is an ATP binding site.

This sequence belongs to the ABC transporter superfamily. sn-glycerol-3-phosphate importer (TC 3.A.1.1.3) family. As to quaternary structure, the complex is composed of two ATP-binding proteins (UgpC), two transmembrane proteins (UgpA and UgpE) and a solute-binding protein (UgpB).

The protein localises to the cell inner membrane. The catalysed reaction is sn-glycerol 3-phosphate(out) + ATP + H2O = sn-glycerol 3-phosphate(in) + ADP + phosphate + H(+). Functionally, part of the ABC transporter complex UgpBAEC involved in sn-glycerol-3-phosphate (G3P) import. Responsible for energy coupling to the transport system. This is sn-glycerol-3-phosphate import ATP-binding protein UgpC from Burkholderia mallei (strain ATCC 23344).